Consider the following 133-residue polypeptide: Ribosome-binding factor A (133 aa).

Belongs to the RbfA family. As to quaternary structure, monomer. Binds 30S ribosomal subunits, but not 50S ribosomal subunits or 70S ribosomes.

Its subcellular location is the cytoplasm. Functionally, one of several proteins that assist in the late maturation steps of the functional core of the 30S ribosomal subunit. Associates with free 30S ribosomal subunits (but not with 30S subunits that are part of 70S ribosomes or polysomes). Required for efficient processing of 16S rRNA. May interact with the 5'-terminal helix region of 16S rRNA. In Citrobacter koseri (strain ATCC BAA-895 / CDC 4225-83 / SGSC4696), this protein is Ribosome-binding factor A.